The following is a 306-amino-acid chain: Ribonuclease Z (306 aa).

Residues H63, H65, D67, H68, H141, D211, and H269 each coordinate Zn(2+). Residue D67 is the Proton acceptor of the active site.

Belongs to the RNase Z family. Homodimer. Zn(2+) serves as cofactor.

The catalysed reaction is Endonucleolytic cleavage of RNA, removing extra 3' nucleotides from tRNA precursor, generating 3' termini of tRNAs. A 3'-hydroxy group is left at the tRNA terminus and a 5'-phosphoryl group is left at the trailer molecule.. Functionally, zinc phosphodiesterase, which displays some tRNA 3'-processing endonuclease activity. Probably involved in tRNA maturation, by removing a 3'-trailer from precursor tRNA. This Staphylococcus epidermidis (strain ATCC 35984 / DSM 28319 / BCRC 17069 / CCUG 31568 / BM 3577 / RP62A) protein is Ribonuclease Z.